The sequence spans 59 residues: Large ribosomal subunit protein uL30 (59 aa).

The protein belongs to the universal ribosomal protein uL30 family. In terms of assembly, part of the 50S ribosomal subunit.

This is Large ribosomal subunit protein uL30 from Geotalea daltonii (strain DSM 22248 / JCM 15807 / FRC-32) (Geobacter daltonii).